We begin with the raw amino-acid sequence, 2079 residues long: Non-reducing polyketide synthase Dhc5 (2079 aa).

The interval 9 to 246 (LLFGDVTDPW…DELNIHALQH (238 aa)) is N-terminal acylcarrier protein transacylase domain (SAT). In terms of domain architecture, Ketosynthase family 3 (KS3) spans 366 to 798 (NDGIAIVGMA…GGNACLLLED (433 aa)). Residues cysteine 543, histidine 678, and histidine 717 each act as for beta-ketoacyl synthase activity in the active site. Positions 895–1199 (VFVFTGQGSH…MTHSLQPKTS (305 aa)) are malonyl-CoA:ACP transacylase (MAT) domain. Residue serine 986 is the For acyl/malonyl transferase activity of the active site. An N-terminal hotdog fold region spans residues 1268–1414 (EPLISTCAQY…DPTRSQVEWD (147 aa)). Positions 1268 to 1584 (EPLISTCAQY…YQELPRATWK (317 aa)) constitute a PKS/mFAS DH domain. Positions 1304–1581 (MDGHKMQGIG…DIRYQELPRA (278 aa)) are product template (PT) domain. A C-terminal hotdog fold region spans residues 1435–1584 (RGHRMQPEVF…YQELPRATWK (150 aa)). The interval 1613 to 1639 (RELQQPSSATVPAQETTIDEPEQQEGE) is disordered. Over residues 1615–1628 (LQQPSSATVPAQET) the composition is skewed to polar residues. The Carrier domain occupies 1641-1718 (AAGARLFNAI…DLRKEFRANE (78 aa)). Serine 1678 bears the O-(pantetheine 4'-phosphoryl)serine mark. A disordered region spans residues 1721 to 1784 (VENPRFSATP…EQKRPVKIDD (64 aa)). The span at 1727–1757 (SATPSSAEASIPSSPSSLAHPMSDSASSLSP) shows a compositional bias: low complexity. Residues 1758-1784 (SDREEALPLERQSMTKREQKRPVKIDD) show a composition bias toward basic and acidic residues. A thioesterase (TE) domain region spans residues 1812–2057 (ADGTGTIATY…LSVAGDHLDL (246 aa)). Histidine 2064 functions as the For thioesterase activity in the catalytic mechanism.

Its pathway is mycotoxin biosynthesis. Highly reducing polyketide synthase; part of the gene cluster that mediates the biosynthesis of 10,11-dehydrocurvularin, a prevalent fungal phytotoxin with heat shock response and immune-modulatory activities. The highly reducing polyketide synthase Dhc3 is responsible for biosynthesis up to the tetraketide stage. The non-reducing polyketide synthase Dhc5 then conducts four additional chain extension cycles, producing the unreduced part of the nascent octaketide from C-1 to C-8 in 10,11-dehydrocurvularin. This chain is Non-reducing polyketide synthase Dhc5, found in Alternaria cinerariae.